The following is a 70-amino-acid chain: U2-agatoxin-Ao1p (70 aa).

The signal sequence occupies residues 1-20 (MRAIISLILISAMVFSMIAA). Residues 21-34 (VPXXEGLQLSEDER) constitute a propeptide that is removed on maturation. 3 cysteine pairs are disulfide-bonded: Cys37–Cys53, Cys44–Cys58, and Cys52–Cys68. Leucine amide is present on Leu69.

This sequence belongs to the neurotoxin 01 (U2-agtx) family. As to expression, expressed by the venom gland.

It is found in the secreted. Insect active toxin causing rapid but reversible paralysis in crickets. No activity shown in mammals. Does not show effect on mammalian voltage-gated calcium channels. The sequence is that of U2-agatoxin-Ao1p from Agelena orientalis (Funnel-web spider).